We begin with the raw amino-acid sequence, 542 residues long: CTP synthase (542 aa).

The interval 1-266 (MATNYIFVTG…DEFVCNRFHL (266 aa)) is amidoligase domain. S14 contacts CTP. S14 is a UTP binding site. ATP is bound by residues 15–20 (SLGKGI) and D72. Mg(2+)-binding residues include D72 and E140. CTP-binding positions include 147-149 (DIE), 187-192 (KTKPTQ), and K223. Residues 187 to 192 (KTKPTQ) and K223 contribute to the UTP site. 239–241 (KDV) lines the ATP pocket. The 252-residue stretch at 291–542 (TIGMVGKYVE…VKAAKENQKK (252 aa)) folds into the Glutamine amidotransferase type-1 domain. G352 contacts L-glutamine. C379 serves as the catalytic Nucleophile; for glutamine hydrolysis. Residues 380 to 383 (LGMQ), E403, and R470 each bind L-glutamine. Residues H515 and E517 contribute to the active site.

Belongs to the CTP synthase family. In terms of assembly, homotetramer.

It catalyses the reaction UTP + L-glutamine + ATP + H2O = CTP + L-glutamate + ADP + phosphate + 2 H(+). The enzyme catalyses L-glutamine + H2O = L-glutamate + NH4(+). The catalysed reaction is UTP + NH4(+) + ATP = CTP + ADP + phosphate + 2 H(+). It participates in pyrimidine metabolism; CTP biosynthesis via de novo pathway; CTP from UDP: step 2/2. Allosterically activated by GTP, when glutamine is the substrate; GTP has no effect on the reaction when ammonia is the substrate. The allosteric effector GTP functions by stabilizing the protein conformation that binds the tetrahedral intermediate(s) formed during glutamine hydrolysis. Inhibited by the product CTP, via allosteric rather than competitive inhibition. Its function is as follows. Catalyzes the ATP-dependent amination of UTP to CTP with either L-glutamine or ammonia as the source of nitrogen. Regulates intracellular CTP levels through interactions with the four ribonucleotide triphosphates. The polypeptide is CTP synthase (Actinobacillus succinogenes (strain ATCC 55618 / DSM 22257 / CCUG 43843 / 130Z)).